Reading from the N-terminus, the 572-residue chain is Proline--tRNA ligase (572 aa).

It belongs to the class-II aminoacyl-tRNA synthetase family. ProS type 1 subfamily. In terms of assembly, homodimer.

The protein resides in the cytoplasm. The catalysed reaction is tRNA(Pro) + L-proline + ATP = L-prolyl-tRNA(Pro) + AMP + diphosphate. Functionally, catalyzes the attachment of proline to tRNA(Pro) in a two-step reaction: proline is first activated by ATP to form Pro-AMP and then transferred to the acceptor end of tRNA(Pro). As ProRS can inadvertently accommodate and process non-cognate amino acids such as alanine and cysteine, to avoid such errors it has two additional distinct editing activities against alanine. One activity is designated as 'pretransfer' editing and involves the tRNA(Pro)-independent hydrolysis of activated Ala-AMP. The other activity is designated 'posttransfer' editing and involves deacylation of mischarged Ala-tRNA(Pro). The misacylated Cys-tRNA(Pro) is not edited by ProRS. The protein is Proline--tRNA ligase of Pectobacterium carotovorum subsp. carotovorum (strain PC1).